Consider the following 40-residue polypeptide: Photosystem II reaction center protein J (40 aa).

Residues 10–30 (LWLVGTVAGTLVIGLLGVFFY) form a helical membrane-spanning segment.

It belongs to the PsbJ family. As to quaternary structure, PSII is composed of 1 copy each of membrane proteins PsbA, PsbB, PsbC, PsbD, PsbE, PsbF, PsbH, PsbI, PsbJ, PsbK, PsbL, PsbM, PsbT, PsbX, PsbY, PsbZ, Psb30/Ycf12, at least 3 peripheral proteins of the oxygen-evolving complex and a large number of cofactors. It forms dimeric complexes.

It localises to the plastid. The protein localises to the chloroplast thylakoid membrane. In terms of biological role, one of the components of the core complex of photosystem II (PSII). PSII is a light-driven water:plastoquinone oxidoreductase that uses light energy to abstract electrons from H(2)O, generating O(2) and a proton gradient subsequently used for ATP formation. It consists of a core antenna complex that captures photons, and an electron transfer chain that converts photonic excitation into a charge separation. This Adiantum capillus-veneris (Maidenhair fern) protein is Photosystem II reaction center protein J.